The primary structure comprises 396 residues: Phosphoglycerate kinase (396 aa).

Residues 21 to 23 (DFN), R36, 59 to 62 (HLGK), R119, and R156 contribute to the substrate site. Residues K206, E325, and 352–355 (GGDS) each bind ATP.

The protein belongs to the phosphoglycerate kinase family. Monomer.

The protein localises to the cytoplasm. It carries out the reaction (2R)-3-phosphoglycerate + ATP = (2R)-3-phospho-glyceroyl phosphate + ADP. It functions in the pathway carbohydrate degradation; glycolysis; pyruvate from D-glyceraldehyde 3-phosphate: step 2/5. The sequence is that of Phosphoglycerate kinase from Macrococcus caseolyticus (strain JCSC5402) (Macrococcoides caseolyticum).